A 36-amino-acid polypeptide reads, in one-letter code: Cytochrome b6-f complex subunit 5 (36 aa).

Residues 5-25 (LLAGIVLGLVPVTLAGLFVAA) form a helical membrane-spanning segment.

This sequence belongs to the PetG family. The 4 large subunits of the cytochrome b6-f complex are cytochrome b6, subunit IV (17 kDa polypeptide, PetD), cytochrome f and the Rieske protein, while the 4 small subunits are PetG, PetL, PetM and PetN. The complex functions as a dimer.

The protein resides in the cellular thylakoid membrane. In terms of biological role, component of the cytochrome b6-f complex, which mediates electron transfer between photosystem II (PSII) and photosystem I (PSI), cyclic electron flow around PSI, and state transitions. PetG is required for either the stability or assembly of the cytochrome b6-f complex. The protein is Cytochrome b6-f complex subunit 5 of Acaryochloris marina (strain MBIC 11017).